The chain runs to 199 residues: Recombination protein RecR (199 aa).

The C4-type zinc finger occupies 58–73; sequence CSICCNITDTDPCSMC. Residues 81 to 176 form the Toprim domain; sequence SVICVVEDPR…KVTRIAHGLP (96 aa).

This sequence belongs to the RecR family.

Functionally, may play a role in DNA repair. It seems to be involved in an RecBC-independent recombinational process of DNA repair. It may act with RecF and RecO. The protein is Recombination protein RecR of Clostridioides difficile (strain 630) (Peptoclostridium difficile).